Here is a 251-residue protein sequence, read N- to C-terminus: Flap endonuclease Xni (251 aa).

A Mg(2+)-binding site is contributed by Asp-104. One can recognise a 5'-3' exonuclease domain in the interval 160–249; it reads VQPQQLPDYW…IDGNLQQLRL (90 aa). The K(+) site is built by Leu-171, Ala-172, Pro-180, Val-182, and Ile-185. Residues 184 to 189 are interaction with DNA; the sequence is GIGPKS.

The protein belongs to the Xni family. Mg(2+) serves as cofactor. Requires K(+) as cofactor.

In terms of biological role, has flap endonuclease activity. During DNA replication, flap endonucleases cleave the 5'-overhanging flap structure that is generated by displacement synthesis when DNA polymerase encounters the 5'-end of a downstream Okazaki fragment. This Escherichia coli O17:K52:H18 (strain UMN026 / ExPEC) protein is Flap endonuclease Xni.